A 421-amino-acid chain; its full sequence is Serine protease HTRA2, mitochondrial (421 aa).

Residues 63–81 (VIRFFVPFSLGALASTMVA) form a helical membrane-spanning segment. The IAP-binding motif lies at 74–77 (ALAS). The segment at 138-301 (SNGSGFVIEQ…IPIDYVKVFL (164 aa)) is serine protease. Active-site charge relay system residues include H156, D188, and S265. The PDZ domain maps to 324 to 409 (MGITMLTLTP…ELDIVILRGV (86 aa)).

Belongs to the peptidase S1C family. Interacts with th/DIAP1 (via BIR 2 domain).

The protein localises to the mitochondrion intermembrane space. It is found in the mitochondrion membrane. It carries out the reaction Cleavage of non-polar aliphatic amino-acids at the P1 position, with a preference for Val, Ile and Met. At the P2 and P3 positions, Arg is selected most strongly with a secondary preference for other hydrophilic residues.. Its function is as follows. Serine protease that shows proteolytic activity against a non-specific substrate beta-casein. Promotes or induces cell death either by direct binding to and inhibition of BIRC proteins (also called inhibitor of apoptosis proteins, IAPs), leading to an increase in caspase activity, or by a BIRC inhibition-independent, caspase-independent and serine protease activity-dependent mechanism. Can antagonize antiapoptotic activity of th/Diap1 by directly inducing the degradation of th/Diap1. The protein is Serine protease HTRA2, mitochondrial of Drosophila virilis (Fruit fly).